The primary structure comprises 501 residues: Cytochrome P450 3A6 (501 aa).

Position 440 (Cys-440) interacts with heme.

Belongs to the cytochrome P450 family. It depends on heme as a cofactor.

It is found in the endoplasmic reticulum membrane. The protein localises to the microsome membrane. It catalyses the reaction an organic molecule + reduced [NADPH--hemoprotein reductase] + O2 = an alcohol + oxidized [NADPH--hemoprotein reductase] + H2O + H(+). Exhibits progesterone 6 beta-hydroxylase activity. This Oryctolagus cuniculus (Rabbit) protein is Cytochrome P450 3A6 (CYP3A6).